Reading from the N-terminus, the 345-residue chain is UDP-N-acetylenolpyruvoylglucosamine reductase (345 aa).

The FAD-binding PCMH-type domain occupies 16–186 (LSVSASCIKV…TAVGIFLKKE (171 aa)). Arg162 is an active-site residue. Residue Ser232 is the Proton donor of the active site. The active site involves Glu328.

This sequence belongs to the MurB family. The cofactor is FAD.

It is found in the cytoplasm. It catalyses the reaction UDP-N-acetyl-alpha-D-muramate + NADP(+) = UDP-N-acetyl-3-O-(1-carboxyvinyl)-alpha-D-glucosamine + NADPH + H(+). The protein operates within cell wall biogenesis; peptidoglycan biosynthesis. Cell wall formation. The protein is UDP-N-acetylenolpyruvoylglucosamine reductase of Pectobacterium atrosepticum (strain SCRI 1043 / ATCC BAA-672) (Erwinia carotovora subsp. atroseptica).